Here is a 360-residue protein sequence, read N- to C-terminus: Peptide chain release factor 1 (360 aa).

Q235 is modified (N5-methylglutamine).

It belongs to the prokaryotic/mitochondrial release factor family. Post-translationally, methylated by PrmC. Methylation increases the termination efficiency of RF1.

It is found in the cytoplasm. Peptide chain release factor 1 directs the termination of translation in response to the peptide chain termination codons UAG and UAA. This Janthinobacterium sp. (strain Marseille) (Minibacterium massiliensis) protein is Peptide chain release factor 1.